A 197-amino-acid chain; its full sequence is Probable chorismate pyruvate-lyase (197 aa).

Substrate is bound by residues Arg66, Leu104, and Glu169.

Belongs to the UbiC family.

It is found in the cytoplasm. It carries out the reaction chorismate = 4-hydroxybenzoate + pyruvate. It participates in cofactor biosynthesis; ubiquinone biosynthesis. Removes the pyruvyl group from chorismate, with concomitant aromatization of the ring, to provide 4-hydroxybenzoate (4HB) for the ubiquinone pathway. In Albidiferax ferrireducens (strain ATCC BAA-621 / DSM 15236 / T118) (Rhodoferax ferrireducens), this protein is Probable chorismate pyruvate-lyase.